Consider the following 197-residue polypeptide: Imidazoleglycerol-phosphate dehydratase (197 aa).

Belongs to the imidazoleglycerol-phosphate dehydratase family.

It is found in the cytoplasm. It catalyses the reaction D-erythro-1-(imidazol-4-yl)glycerol 3-phosphate = 3-(imidazol-4-yl)-2-oxopropyl phosphate + H2O. The protein operates within amino-acid biosynthesis; L-histidine biosynthesis; L-histidine from 5-phospho-alpha-D-ribose 1-diphosphate: step 6/9. This chain is Imidazoleglycerol-phosphate dehydratase, found in Nitrobacter hamburgensis (strain DSM 10229 / NCIMB 13809 / X14).